Consider the following 168-residue polypeptide: MEFVLFSQMSSFFLVSTLLLFLIISHSCHAQNSQQDYLDAHNTARADVGVEPLTWDDQVAAYAQNYASQLAADCNLVHSHGQYGENLAWGSGDFLTAAKAVEMWVNEKQYYAHDSNTCAQGQVCGHYTQVVWRNSVRVGCARVQCNNGGYIVSCNYDPPGNVIGKSPY.

The N-terminal stretch at 1–30 (MEFVLFSQMSSFFLVSTLLLFLIISHSCHA) is a signal peptide. Residues 38 to 156 (LDAHNTARAD…NGGYIVSCNY (119 aa)) form the SCP domain.

Belongs to the CRISP family. In terms of processing, three disulfide bonds are present.

It is found in the vacuole. In terms of biological role, probably involved in the defense reaction of plants against pathogens. In Nicotiana tabacum (Common tobacco), this protein is Pathogenesis-related protein 1C.